Here is a 584-residue protein sequence, read N- to C-terminus: DNA damage-binding protein 2 (584 aa).

A disordered region spans residues 1 to 87; that stretch reads MGPTTRARFV…PVAAAARSGR (87 aa). The segment covering 8–20 has biased composition (basic residues); that stretch reads RFVHNRRRRRRRG. Composition is skewed to acidic residues over residues 25-35 and 45-66; these read PDDDDEEEDQQ and DEGEEDAEEEGSGEVDDDDGEA. The CCHC-type zinc finger occupies 122–140; sequence KPCFLCKMPGGHTTLTCPH. WD repeat units follow at residues 192-232, 236-278, 288-327, 333-373, 378-418, 438-481, and 484-523; these read FHQR…EKIT, VHSC…SLLN, STWRMIYGMDFNSDKGLLLVADSFGFLHLLDRRLKARIGD, KKGS…PNSA, AHGR…LESP, EWDP…LAEV, and PDITTISPVNKLHPRDDILASGSSRSIFIWKPKTESDATE. The DWD box motif lies at 351 to 366; that stretch reads LLSSGNDHYARIWDTR. Positions 517–532 are enriched in basic and acidic residues; sequence TESDATEERNREKAKE. The interval 517–584 is disordered; that stretch reads TESDATEERN…TIKGKGKSKV (68 aa). Over residues 562 to 584 the composition is skewed to basic residues; it reads KKKKKAKKTRFTHTIKGKGKSKV.

The protein belongs to the WD repeat DDB2/WDR76 family. As to quaternary structure, component of the UV-DDB complex, which is composed of DDB1 and DDB2. As to expression, expressed in proliferating tissues such as shoot apical meristem (SAM), root tips and young leaves. Not detected in mature leaves.

It is found in the nucleus. Its function is as follows. Required for DNA repair. Binds to DDB1 to form the UV-damaged DNA-binding protein complex (the UV-DDB complex). The UV-DDB complex may recognize UV-induced DNA damage and recruit proteins of the nucleotide excision repair pathway (the NER pathway) to initiate DNA repair. May function as the substrate recognition module for a DCX (DDB1-CUL4-X-box) E3 ubiquitin-protein ligase complex. The protein is DNA damage-binding protein 2 of Oryza sativa subsp. japonica (Rice).